A 319-amino-acid polypeptide reads, in one-letter code: 4-hydroxy-3-methylbut-2-enyl diphosphate reductase (319 aa).

Cysteine 18 provides a ligand contact to [4Fe-4S] cluster. Positions 47 and 81 each coordinate (2E)-4-hydroxy-3-methylbut-2-enyl diphosphate. Dimethylallyl diphosphate contacts are provided by histidine 47 and histidine 81. 2 residues coordinate isopentenyl diphosphate: histidine 47 and histidine 81. Residue cysteine 103 participates in [4Fe-4S] cluster binding. Histidine 131 contacts (2E)-4-hydroxy-3-methylbut-2-enyl diphosphate. Histidine 131 is a dimethylallyl diphosphate binding site. Histidine 131 contributes to the isopentenyl diphosphate binding site. Glutamate 133 functions as the Proton donor in the catalytic mechanism. Residue threonine 172 participates in (2E)-4-hydroxy-3-methylbut-2-enyl diphosphate binding. Cysteine 202 is a binding site for [4Fe-4S] cluster. Serine 230, serine 231, asparagine 232, and serine 275 together coordinate (2E)-4-hydroxy-3-methylbut-2-enyl diphosphate. Dimethylallyl diphosphate-binding residues include serine 230, serine 231, asparagine 232, and serine 275. Isopentenyl diphosphate contacts are provided by serine 230, serine 231, asparagine 232, and serine 275.

The protein belongs to the IspH family. [4Fe-4S] cluster serves as cofactor.

It catalyses the reaction isopentenyl diphosphate + 2 oxidized [2Fe-2S]-[ferredoxin] + H2O = (2E)-4-hydroxy-3-methylbut-2-enyl diphosphate + 2 reduced [2Fe-2S]-[ferredoxin] + 2 H(+). The catalysed reaction is dimethylallyl diphosphate + 2 oxidized [2Fe-2S]-[ferredoxin] + H2O = (2E)-4-hydroxy-3-methylbut-2-enyl diphosphate + 2 reduced [2Fe-2S]-[ferredoxin] + 2 H(+). It functions in the pathway isoprenoid biosynthesis; dimethylallyl diphosphate biosynthesis; dimethylallyl diphosphate from (2E)-4-hydroxy-3-methylbutenyl diphosphate: step 1/1. The protein operates within isoprenoid biosynthesis; isopentenyl diphosphate biosynthesis via DXP pathway; isopentenyl diphosphate from 1-deoxy-D-xylulose 5-phosphate: step 6/6. Catalyzes the conversion of 1-hydroxy-2-methyl-2-(E)-butenyl 4-diphosphate (HMBPP) into a mixture of isopentenyl diphosphate (IPP) and dimethylallyl diphosphate (DMAPP). Acts in the terminal step of the DOXP/MEP pathway for isoprenoid precursor biosynthesis. In Methylocella silvestris (strain DSM 15510 / CIP 108128 / LMG 27833 / NCIMB 13906 / BL2), this protein is 4-hydroxy-3-methylbut-2-enyl diphosphate reductase.